The sequence spans 371 residues: uncharacterized protein (371 aa).

Transmembrane regions (helical) follow at residues 9 to 29 (FTLD…VFLI), 58 to 78 (VLAF…FLAI), 98 to 118 (LIVA…SFIF), 133 to 153 (LAPF…VSVI), 159 to 179 (YDVN…ALAA), 183 to 203 (ISNF…IGDW), and 330 to 350 (IIEI…MVVV).

It belongs to the MscS (TC 1.A.23) family.

It localises to the cell membrane. Its function is as follows. May play a role in resistance to osmotic downshock. This is an uncharacterized protein from Bacillus subtilis (strain 168).